Consider the following 472-residue polypeptide: Pyruvate kinase (472 aa).

Residue arginine 33 participates in substrate binding. Asparagine 35, serine 37, and aspartate 67 together coordinate K(+). 35-38 (NFSH) contacts ATP. Residues arginine 74 and lysine 155 each contribute to the ATP site. Residue glutamate 220 participates in Mg(2+) binding. Glycine 243, aspartate 244, and threonine 276 together coordinate substrate. Aspartate 244 provides a ligand contact to Mg(2+).

The protein belongs to the pyruvate kinase family. As to quaternary structure, homotetramer. The cofactor is Mg(2+). It depends on K(+) as a cofactor.

It catalyses the reaction pyruvate + ATP = phosphoenolpyruvate + ADP + H(+). Its pathway is carbohydrate degradation; glycolysis; pyruvate from D-glyceraldehyde 3-phosphate: step 5/5. The protein is Pyruvate kinase (pyk) of Mycobacterium tuberculosis (strain CDC 1551 / Oshkosh).